The chain runs to 181 residues: ATP synthase subunit delta (181 aa).

It belongs to the ATPase delta chain family. F-type ATPases have 2 components, F(1) - the catalytic core - and F(0) - the membrane proton channel. F(1) has five subunits: alpha(3), beta(3), gamma(1), delta(1), epsilon(1). F(0) has three main subunits: a(1), b(2) and c(10-14). The alpha and beta chains form an alternating ring which encloses part of the gamma chain. F(1) is attached to F(0) by a central stalk formed by the gamma and epsilon chains, while a peripheral stalk is formed by the delta and b chains.

Its subcellular location is the cell membrane. In terms of biological role, f(1)F(0) ATP synthase produces ATP from ADP in the presence of a proton or sodium gradient. F-type ATPases consist of two structural domains, F(1) containing the extramembraneous catalytic core and F(0) containing the membrane proton channel, linked together by a central stalk and a peripheral stalk. During catalysis, ATP synthesis in the catalytic domain of F(1) is coupled via a rotary mechanism of the central stalk subunits to proton translocation. Functionally, this protein is part of the stalk that links CF(0) to CF(1). It either transmits conformational changes from CF(0) to CF(1) or is implicated in proton conduction. The protein is ATP synthase subunit delta of Mycoplasmoides gallisepticum (strain R(low / passage 15 / clone 2)) (Mycoplasma gallisepticum).